Consider the following 663-residue polypeptide: DNA ligase (663 aa).

NAD(+)-binding positions include 34–38, 83–84, and glutamate 114; these read DYEYD and SL. Lysine 116 acts as the N6-AMP-lysine intermediate in catalysis. Residues arginine 137, glutamate 171, lysine 286, and lysine 310 each contribute to the NAD(+) site. Zn(2+) is bound by residues cysteine 404, cysteine 407, cysteine 422, and cysteine 427. The BRCT domain occupies 585–663; the sequence is TVESPLTGKN…ADEFIKLANG (79 aa).

This sequence belongs to the NAD-dependent DNA ligase family. LigA subfamily. It depends on Mg(2+) as a cofactor. Requires Mn(2+) as cofactor.

The enzyme catalyses NAD(+) + (deoxyribonucleotide)n-3'-hydroxyl + 5'-phospho-(deoxyribonucleotide)m = (deoxyribonucleotide)n+m + AMP + beta-nicotinamide D-nucleotide.. Functionally, DNA ligase that catalyzes the formation of phosphodiester linkages between 5'-phosphoryl and 3'-hydroxyl groups in double-stranded DNA using NAD as a coenzyme and as the energy source for the reaction. It is essential for DNA replication and repair of damaged DNA. The sequence is that of DNA ligase from Brachyspira hyodysenteriae (strain ATCC 49526 / WA1).